Reading from the N-terminus, the 356-residue chain is NAC domain-containing protein JA2L (356 aa).

In terms of domain architecture, NAC spans 14–162; it reads LPPGFRFYPT…DWVLCRIYKK (149 aa). The DNA-binding element occupies 111–168; sequence VGIKKALVFYIGKAPKGTKTNWIMHEYRLSEPTTKTGSSRLDDWVLCRIYKKNSGGQK. The interval 163 to 191 is disordered; sequence NSGGQKSSCSDLQNKDISHASSSSSSSQF. Over residues 164–174 the composition is skewed to polar residues; the sequence is SGGQKSSCSDL.

In terms of tissue distribution, expressed in guard cells of the epidermis.

It is found in the nucleus. Its function is as follows. Transcription factor that acts downstream of MYC2 in the jasmonate-mediated response to Botrytis cinerea infection. With MYC2 forms a transcription module that regulates wounding-responsive genes. Involved in jasmonate- and coronatine-mediated stomatal reopening in response to Pseudomonas syringae pv tomato DC3000 infection. Regulates the expression of threonine deaminase 2 (TD2) through promoter binding. The sequence is that of NAC domain-containing protein JA2L from Solanum lycopersicum (Tomato).